The following is a 59-amino-acid chain: Protein translocase subunit SecE (59 aa).

Residues 30-50 traverse the membrane as a helical segment; sequence ITVITTVIFFAIFFALIDSGI.

This sequence belongs to the SecE/SEC61-gamma family. In terms of assembly, component of the Sec protein translocase complex. Heterotrimer consisting of SecY, SecE and SecG subunits. The heterotrimers can form oligomers, although 1 heterotrimer is thought to be able to translocate proteins. Interacts with the ribosome. Interacts with SecDF, and other proteins may be involved. Interacts with SecA.

It is found in the cell membrane. Functionally, essential subunit of the Sec protein translocation channel SecYEG. Clamps together the 2 halves of SecY. May contact the channel plug during translocation. This is Protein translocase subunit SecE from Bacillus licheniformis.